A 134-amino-acid polypeptide reads, in one-letter code: Retinoid-binding protein 7 (134 aa).

Belongs to the calycin superfamily. Fatty-acid binding protein (FABP) family. As to expression, expressed primarily in kidney, heart and transverse colon. Detected in adult lymph node, appendix, ascending colon, and in fetal heart and spleen.

The protein localises to the cytoplasm. Functionally, intracellular transport of retinol. The protein is Retinoid-binding protein 7 (RBP7) of Homo sapiens (Human).